Consider the following 670-residue polypeptide: DNA ligase (670 aa).

NAD(+)-binding positions include Asp32–Asp36, Ser81–Leu82, and Glu111. The N6-AMP-lysine intermediate role is filled by Lys113. The NAD(+) site is built by Arg134, Glu171, Lys290, and Lys314. 4 residues coordinate Zn(2+): Cys408, Cys411, Cys426, and Cys432. One can recognise a BRCT domain in the interval Glu591–Glu670.

The protein belongs to the NAD-dependent DNA ligase family. LigA subfamily. It depends on Mg(2+) as a cofactor. Requires Mn(2+) as cofactor.

It catalyses the reaction NAD(+) + (deoxyribonucleotide)n-3'-hydroxyl + 5'-phospho-(deoxyribonucleotide)m = (deoxyribonucleotide)n+m + AMP + beta-nicotinamide D-nucleotide.. Its function is as follows. DNA ligase that catalyzes the formation of phosphodiester linkages between 5'-phosphoryl and 3'-hydroxyl groups in double-stranded DNA using NAD as a coenzyme and as the energy source for the reaction. It is essential for DNA replication and repair of damaged DNA. This chain is DNA ligase, found in Shewanella sediminis (strain HAW-EB3).